Consider the following 326-residue polypeptide: tRNA-modifying protein YgfZ (326 aa).

Trp-27 and Trp-189 together coordinate folate.

The protein belongs to the tRNA-modifying YgfZ family.

The protein resides in the cytoplasm. In terms of biological role, folate-binding protein involved in regulating the level of ATP-DnaA and in the modification of some tRNAs. It is probably a key factor in regulatory networks that act via tRNA modification, such as initiation of chromosomal replication. The sequence is that of tRNA-modifying protein YgfZ from Shigella sonnei (strain Ss046).